The primary structure comprises 484 residues: Zinc metalloproteinase-disintegrin stejnitin (484 aa).

An N-terminal signal peptide occupies residues 1 to 20 (MIQVLLVTICLAVFPYQGNS). Residues 21–192 (IILESGNVND…ASQLNLTPDE (172 aa)) constitute a propeptide that is removed on maturation. Pyrrolidone carboxylic acid is present on Gln-193. The Peptidase M12B domain maps to 194–392 (RFIELVIVAD…YTSRCLYNGP (199 aa)). Glu-197 is a Ca(2+) binding site. The N-linked (GlcNAc...) asparagine glycan is linked to Asn-254. Asp-281 contributes to the Ca(2+) binding site. 3 disulfides stabilise this stretch: Cys-305–Cys-387, Cys-345–Cys-369, and Cys-347–Cys-352. Residues His-330, His-334, and His-340 each coordinate Zn(2+). Cys-387, Asn-390, Val-402, Asn-405, Glu-409, Glu-412, and Asp-415 together coordinate Ca(2+). A Disintegrin domain is found at 400 to 484 (PPVCGNYYVE…GDCPRNPFRA (85 aa)). Cystine bridges form between Cys-403–Cys-422, Cys-414–Cys-432, Cys-416–Cys-427, Cys-426–Cys-449, Cys-440–Cys-446, Cys-445–Cys-470, and Cys-458–Cys-477. The Cell attachment site signature appears at 462–464 (KGD).

The protein belongs to the venom metalloproteinase (M12B) family. P-II subfamily. P-IIb sub-subfamily. Zn(2+) serves as cofactor. In terms of processing, the N-terminus is blocked. As to expression, expressed by the venom gland.

Its subcellular location is the secreted. Snake venom zinc metalloproteinase that inhibits ADP-induced platelet aggregation in human platelet-rich plasma (IC(50) is 175 nM) and cleaves alpha-(FGA) and subsequently the beta-chain (FGG) of bovine fibrinogen, leaving the gamma-chain unaffected. It is also able to inhibit proliferatin of ECV304 cells by inducing apoptosis of these cells. The polypeptide is Zinc metalloproteinase-disintegrin stejnitin (Trimeresurus stejnegeri (Chinese green tree viper)).